A 147-amino-acid polypeptide reads, in one-letter code: Hemoglobin subunit beta (147 aa).

One can recognise a Globin domain in the interval 3–147 (LLSAEENAHV…VANALAHKYH (145 aa)). Threonine 13 carries the post-translational modification Phosphothreonine. The residue at position 45 (serine 45) is a Phosphoserine. Lysine 60 carries the N6-acetyllysine modification. Position 64 (histidine 64) interacts with heme b. Lysine 83 carries the N6-acetyllysine modification. Histidine 93 is a binding site for heme b. Position 94 is an S-nitrosocysteine (cysteine 94). An N6-acetyllysine modification is found at lysine 145.

This sequence belongs to the globin family. Heterotetramer of two alpha chains and two beta chains. Red blood cells.

In terms of biological role, involved in oxygen transport from the lung to the various peripheral tissues. This is Hemoglobin subunit beta (HBB) from Eulemur fulvus fulvus (Brown lemur).